Consider the following 547-residue polypeptide: Probable acetolactate synthase (547 aa).

Residue Glu57 participates in thiamine diphosphate binding. FAD is bound by residues Pro159 and 299-318 (DRVE…LYGD). The interval 388-468 (DFGSYAGRMI…VVSVIGNNGI (81 aa)) is thiamine pyrophosphate binding. Asp439 and Asn466 together coordinate Mg(2+).

It belongs to the TPP enzyme family. Mg(2+) is required as a cofactor. Thiamine diphosphate serves as cofactor.

It catalyses the reaction 2 pyruvate + H(+) = (2S)-2-acetolactate + CO2. The protein operates within amino-acid biosynthesis; L-isoleucine biosynthesis; L-isoleucine from 2-oxobutanoate: step 1/4. It functions in the pathway amino-acid biosynthesis; L-valine biosynthesis; L-valine from pyruvate: step 1/4. This is Probable acetolactate synthase (ilvG) from Mycobacterium bovis (strain ATCC BAA-935 / AF2122/97).